A 493-amino-acid polypeptide reads, in one-letter code: MSLLKMEYNLYTELKKMTCGQSLSLFNEDGDFVEVEPGSSFKFLIPKGFYSSPSVKTSLVFETLTTTDNKITSINPTNAPKLYPIQCKVVSEVVSNMRKMIELKRPLYITLHLACGFGKTITTCYLMAIHGRKTVICVPNKMLIHQWKTQVEAVGLEHKISIDGVSILLKELKTQSPDVLIVVSRHLTNDAFCKYINKHYDLFILDESHTYNLMNNTAVTRFLAYYPPMMCYFLTATPRPSNRIYCNSIINIAKLSDLKKTIYVVDSFFEPYSTDNIRHMIKRLDGASNKYHIYTEKLLSVDEPRNQLILNTLVEEFKSGTINRILVITKLREHMVLFYKRLLNLFGPEVVFIGDAQNRRTPDMVKSIKELNRFIFVSTLFYSGTGLDIPSLDSLFICSAVINNMQIEQLLGRVCRETALLDRRVYVFPNTSIKEIKYMIGNFVQRIISLSVDKLGFKQESYRKHQESDPTSACTTSSREERVLNRIFNSQNR.

In terms of domain architecture, Helicase ATP-binding spans 100 to 256 (MIELKRPLYI…NSIINIAKLS (157 aa)). 113-120 (LACGFGKT) contributes to the ATP binding site. The DESH box motif lies at 206 to 209 (DESH).

Belongs to the helicase family. Poxviruses subfamily. In terms of assembly, interacts with G2. Might be part of a transcription complex composed at least of G2, A18, and H5.

It localises to the virion. In terms of biological role, DNA helicase which seems to act as a postreplicative transcription termination factor. Involved in ATP-dependent release of nascent RNA. Forms a stable complex with single-stranded DNA, and to a lesser extent RNA. The chain is Transcript termination protein A18 from Camelus.